The primary structure comprises 371 residues: Carbamoyl phosphate synthase small chain (371 aa).

The segment at 1-182 (MGVHKKGYLV…KNPIVHTPKN (182 aa)) is CPSase. Serine 49, glycine 235, and glycine 237 together coordinate L-glutamine. A Glutamine amidotransferase type-1 domain is found at 186–371 (RVVVLDLGVK…EFVKILEGRK (186 aa)). Residue cysteine 263 is the Nucleophile of the active site. L-glutamine-binding residues include leucine 264, glutamine 267, asparagine 305, glycine 307, and tyrosine 308. Residues histidine 346 and glutamate 348 contribute to the active site.

Belongs to the CarA family. Composed of two chains; the small (or glutamine) chain promotes the hydrolysis of glutamine to ammonia, which is used by the large (or ammonia) chain to synthesize carbamoyl phosphate. Tetramer of heterodimers (alpha,beta)4.

The enzyme catalyses hydrogencarbonate + L-glutamine + 2 ATP + H2O = carbamoyl phosphate + L-glutamate + 2 ADP + phosphate + 2 H(+). It carries out the reaction L-glutamine + H2O = L-glutamate + NH4(+). It functions in the pathway amino-acid biosynthesis; L-arginine biosynthesis; carbamoyl phosphate from bicarbonate: step 1/1. It participates in pyrimidine metabolism; UMP biosynthesis via de novo pathway; (S)-dihydroorotate from bicarbonate: step 1/3. In terms of biological role, small subunit of the glutamine-dependent carbamoyl phosphate synthetase (CPSase). CPSase catalyzes the formation of carbamoyl phosphate from the ammonia moiety of glutamine, carbonate, and phosphate donated by ATP, constituting the first step of 2 biosynthetic pathways, one leading to arginine and/or urea and the other to pyrimidine nucleotides. The small subunit (glutamine amidotransferase) binds and cleaves glutamine to supply the large subunit with the substrate ammonia. This is Carbamoyl phosphate synthase small chain from Pyrococcus furiosus (strain ATCC 43587 / DSM 3638 / JCM 8422 / Vc1).